A 387-amino-acid chain; its full sequence is Cyclin-J-like protein (387 aa).

A Cyclin N-terminal domain is found at 13–142 (DVHCTLREKE…LLEAFSWDLC (130 aa)).

This sequence belongs to the cyclin family. Cyclin J subfamily.

This Mus musculus (Mouse) protein is Cyclin-J-like protein (Ccnjl).